Reading from the N-terminus, the 444-residue chain is Trigger factor (444 aa).

The 86-residue stretch at 166–251 (GDQVVIDFKG…VKAVKAPKAA (86 aa)) folds into the PPIase FKBP-type domain.

It belongs to the FKBP-type PPIase family. Tig subfamily.

Its subcellular location is the cytoplasm. The catalysed reaction is [protein]-peptidylproline (omega=180) = [protein]-peptidylproline (omega=0). Its function is as follows. Involved in protein export. Acts as a chaperone by maintaining the newly synthesized protein in an open conformation. Functions as a peptidyl-prolyl cis-trans isomerase. This is Trigger factor from Cereibacter sphaeroides (strain KD131 / KCTC 12085) (Rhodobacter sphaeroides).